We begin with the raw amino-acid sequence, 450 residues long: UDP-N-acetylmuramoylalanine--D-glutamate ligase (450 aa).

An ATP-binding site is contributed by 119 to 125 (GSNGKTT).

This sequence belongs to the MurCDEF family.

Its subcellular location is the cytoplasm. It carries out the reaction UDP-N-acetyl-alpha-D-muramoyl-L-alanine + D-glutamate + ATP = UDP-N-acetyl-alpha-D-muramoyl-L-alanyl-D-glutamate + ADP + phosphate + H(+). Its pathway is cell wall biogenesis; peptidoglycan biosynthesis. Its function is as follows. Cell wall formation. Catalyzes the addition of glutamate to the nucleotide precursor UDP-N-acetylmuramoyl-L-alanine (UMA). In Streptococcus sanguinis (strain SK36), this protein is UDP-N-acetylmuramoylalanine--D-glutamate ligase.